The sequence spans 557 residues: 2-isopropylmalate synthase (557 aa).

Residues 33 to 307 enclose the Pyruvate carboxyltransferase domain; that stretch reads PIWCSSDLRD…DPQLDFSDID (275 aa). The Mg(2+) site is built by Asp42, His246, His248, and Asn282. A regulatory domain region spans residues 439 to 557; it reads ANAPYALVSH…SLSQQQAKAA (119 aa).

This sequence belongs to the alpha-IPM synthase/homocitrate synthase family. LeuA type 2 subfamily. Homodimer. The cofactor is Mg(2+).

The protein resides in the cytoplasm. The catalysed reaction is 3-methyl-2-oxobutanoate + acetyl-CoA + H2O = (2S)-2-isopropylmalate + CoA + H(+). Its pathway is amino-acid biosynthesis; L-leucine biosynthesis; L-leucine from 3-methyl-2-oxobutanoate: step 1/4. Functionally, catalyzes the condensation of the acetyl group of acetyl-CoA with 3-methyl-2-oxobutanoate (2-ketoisovalerate) to form 3-carboxy-3-hydroxy-4-methylpentanoate (2-isopropylmalate). This Pseudomonas entomophila (strain L48) protein is 2-isopropylmalate synthase.